A 398-amino-acid polypeptide reads, in one-letter code: Glucose-1-phosphate adenylyltransferase (398 aa).

Alpha-D-glucose 1-phosphate contacts are provided by residues Tyr100, Gly165, 180–181 (EK), and Ser191.

It belongs to the bacterial/plant glucose-1-phosphate adenylyltransferase family. Homotetramer.

The enzyme catalyses alpha-D-glucose 1-phosphate + ATP + H(+) = ADP-alpha-D-glucose + diphosphate. Its pathway is glycan biosynthesis; glycogen biosynthesis. In terms of biological role, involved in the biosynthesis of ADP-glucose, a building block required for the elongation reactions to produce glycogen. Catalyzes the reaction between ATP and alpha-D-glucose 1-phosphate (G1P) to produce pyrophosphate and ADP-Glc. This is Glucose-1-phosphate adenylyltransferase from Desulfitobacterium hafniense (strain Y51).